The following is a 429-amino-acid chain: Saccharopine dehydrogenase-like oxidoreductase (429 aa).

Ala-2 carries the N-acetylalanine modification. Phosphoserine is present on Ser-217.

The protein belongs to the saccharopine dehydrogenase family.

The polypeptide is Saccharopine dehydrogenase-like oxidoreductase (SCCPDH) (Pongo abelii (Sumatran orangutan)).